The chain runs to 504 residues: MNLYISILILIISLIIFFKNNNRISKINSKIPGPIRLPIFGNLLQINKDPHIQFQKWYEKYGVIYSIRLGNIETVVFTGYPIFKKAFIENSQIFAPRFQHLSRFEANGCKNLIGSNDEIHSTLKKLILTEITSNKIKKMENHIVLECENLCKQLDKHCQDGLPFSLNMYFKLFSLNIILRFLFGTINNSYQDKSNQDIVDVIIEFLHYGGNPIMSDFIPILKPFYKQNKFFKFYPILCDHLNKLIENYKNNKQLQKQQKQQQNEDDDDDDDGTIIGKLLKEYHNGKISWTSVVSTCVDVFLAGVDSTSNSTIFTLIALVNNSNCQEKLFNEIKNNLKKSDDGHDEIVIRHSLYRSSIPYLSLVMKEVYRLYSVILIGLPHITSEDVEIEGYKIAKGTQIIQNVFSTHLCEKTFPMSKSFIPERFIETGSNNMFGGGQTNLVHFGTGVRDCVGKSLADCEIFTVLATLINRYQFINPTLEPLNDIGSFGIAYQPPINNFIIKKRL.

The helical transmembrane segment at 1–21 (MNLYISILILIISLIIFFKNN) threads the bilayer. Residue Cys-450 participates in heme binding.

This sequence belongs to the cytochrome P450 family. Requires heme as cofactor.

The protein resides in the membrane. The protein is Probable cytochrome P450 513E1 (cyp513E1) of Dictyostelium discoideum (Social amoeba).